Here is a 106-residue protein sequence, read N- to C-terminus: ATP-dependent Clp protease adapter protein ClpS (106 aa).

The protein belongs to the ClpS family. As to quaternary structure, binds to the N-terminal domain of the chaperone ClpA.

Its function is as follows. Involved in the modulation of the specificity of the ClpAP-mediated ATP-dependent protein degradation. This is ATP-dependent Clp protease adapter protein ClpS from Aliivibrio salmonicida (strain LFI1238) (Vibrio salmonicida (strain LFI1238)).